A 373-amino-acid polypeptide reads, in one-letter code: CCA-adding enzyme (373 aa).

The ATP site is built by Gly-8 and Arg-11. Gly-8 and Arg-11 together coordinate CTP. Mg(2+) contacts are provided by Asp-21 and Asp-23. ATP is bound by residues Arg-91, Arg-137, and Arg-140. 3 residues coordinate CTP: Arg-91, Arg-137, and Arg-140.

Belongs to the tRNA nucleotidyltransferase/poly(A) polymerase family. Bacterial CCA-adding enzyme type 2 subfamily. Requires Mg(2+) as cofactor.

It carries out the reaction a tRNA precursor + 2 CTP + ATP = a tRNA with a 3' CCA end + 3 diphosphate. The enzyme catalyses a tRNA with a 3' CCA end + 2 CTP + ATP = a tRNA with a 3' CCACCA end + 3 diphosphate. Its function is as follows. Catalyzes the addition and repair of the essential 3'-terminal CCA sequence in tRNAs without using a nucleic acid template. Adds these three nucleotides in the order of C, C, and A to the tRNA nucleotide-73, using CTP and ATP as substrates and producing inorganic pyrophosphate. tRNA 3'-terminal CCA addition is required both for tRNA processing and repair. Also involved in tRNA surveillance by mediating tandem CCA addition to generate a CCACCA at the 3' terminus of unstable tRNAs. While stable tRNAs receive only 3'-terminal CCA, unstable tRNAs are marked with CCACCA and rapidly degraded. The chain is CCA-adding enzyme from Marinobacter nauticus (strain ATCC 700491 / DSM 11845 / VT8) (Marinobacter aquaeolei).